We begin with the raw amino-acid sequence, 595 residues long: MKFFSYILVYRRFLFVVFTVLVLLPLPIVLHTKEAECAYTLFVVATFWLTEALPLSVTALLPSLMLPMFGIMPSKKVASAYFKDFHLLLIGVICLATSIEKWNLHKRIALKMVMMVGVNPAWLTLGFMSSTAFLSMWLSNTSTAAMVMPIAEAVVQQIINAEAEVEATQMTYFNGSTNHGLEIDESVNGHEINERKEKTKPVPGYNNDTGKISSKVELEKNSGMRTKYRTKKGHVTRKLTCLCIAYSSTIGGLTTITGTSTNLIFAEYFNTRYPDCRCLNFGSWFTFSFPAALIILLLSWIWLQWLFLGFNFKEMFKCGKTKTVQQKACAEVIKQEYQKLGPIRYQEIVTLVLFIIMALLWFSRDPGFVPGWSALFSEYPGFATDSTVALLIGLLFFLIPAKTLTKTTPTGEIVAFDYSPLITWKEFQSFMPWDIAILVGGGFALADGCEESGLSKWIGNKLSPLGSLPAWLIILISSLMVTSLTEVASNPATITLFLPILSPLAEAIHVNPLYILIPSTLCTSFAFLLPVANPPNAIVFSYGHLKVIDMVKAGLGVNIVGVAVVMLGICTWIVPMFDLYTYPSWAPAMSNETMP.

The next 5 membrane-spanning stretches (helical) occupy residues 13–33 (FLFV…LHTK), 41–61 (LFVV…TALL), 77–97 (VASA…CLAT), 108–128 (IALK…LGFM), and 131–151 (TAFL…MPIA). N-linked (GlcNAc...) asparagine glycans are attached at residues N174 and N207. Transmembrane regions (helical) follow at residues 239–259 (LTCL…ITGT), 290–310 (PAAL…FLGF), 348–368 (IVTL…DPGF), 381–401 (GFAT…LIPA), 464–484 (PLGS…VTSL), 491–511 (PATI…IHVN), 512–532 (PLYI…LPVA), and 554–574 (GLGV…TWIV). N591 carries an N-linked (GlcNAc...) asparagine glycan.

The protein belongs to the SLC13A/DASS transporter (TC 2.A.47) family. NADC subfamily. As to expression, highly expressed in kidney; not detectable in the other tissues tested.

It is found in the apical cell membrane. It carries out the reaction sulfate(out) + 3 Na(+)(out) = sulfate(in) + 3 Na(+)(in). It catalyses the reaction selenate(out) + 3 Na(+)(out) = selenate(in) + 3 Na(+)(in). The enzyme catalyses thiosulfate(out) + 3 Na(+)(out) = thiosulfate(in) + 3 Na(+)(in). With respect to regulation, inhibited by thiosulfate, selenate, molybdate, tungstate, citrate and succinate. Functionally, sodium:sulfate symporter that mediates sulfate reabsorption in the kidney and small intestine. Can also mediate the transport of selenate and thiosulfate. The polypeptide is Solute carrier family 13 member 1 (SLC13A1) (Homo sapiens (Human)).